A 200-amino-acid polypeptide reads, in one-letter code: LexA repressor (200 aa).

Residues 28–48 constitute a DNA-binding region (H-T-H motif); it reads RAEIAQHFGFSSPNAAEQHLK. Active-site for autocatalytic cleavage activity residues include Ser117 and Lys154.

This sequence belongs to the peptidase S24 family. As to quaternary structure, homodimer.

The enzyme catalyses Hydrolysis of Ala-|-Gly bond in repressor LexA.. Its function is as follows. Represses a number of genes involved in the response to DNA damage (SOS response), including recA and lexA. In the presence of single-stranded DNA, RecA interacts with LexA causing an autocatalytic cleavage which disrupts the DNA-binding part of LexA, leading to derepression of the SOS regulon and eventually DNA repair. The protein is LexA repressor of Thiobacillus denitrificans (strain ATCC 25259 / T1).